We begin with the raw amino-acid sequence, 344 residues long: Putative esterase NocK (344 aa).

A signal peptide (tat-type signal) is located at residues 1 to 34 (MIGVTRRSGLALAVLVSSAACAGAEPVAPPPAPA). The interval 265-295 (GGADERRREEARPAAAPGGTSTSRETCANPD) is disordered. A compositionally biased stretch (basic and acidic residues) spans 266 to 276 (GADERRREEAR).

The protein belongs to the AB hydrolase superfamily. Post-translationally, predicted to be exported by the Tat system. The position of the signal peptide cleavage has not been experimentally proven.

The chain is Putative esterase NocK from Nocardia uniformis subsp. tsuyamanensis.